Reading from the N-terminus, the 1120-residue chain is MELFQAKDHYILQSGDNALWCSRKDGSMAVRPATDLLLAWNPVCLGLVEGIIGKMQLHVDLPLGLILIRQKALVGQLPGDHKVYKITKIVVIPLSEDEPQDLELELCKKHHFGINKPERITQSPDETKFLMKTLSQIKSNVGAPIKKKVKENKEKERLERRLLDELYKIFMDSDSFYYSLTYDLTNTVQRQGELGKSDQPLWKRVDDRFFWNKHMIKDLVDLQAPQVDFWVIPIIQGFVQVEELVVNYNESSDEERSSPETPLQEPTCVDDIHPRFTVALISRRSRHRAGMRYKRRGVDTDGHVANYVETEQLIHVHSHTLSFVQTRGSVPVFWSQAGYRYNPRPRIEKGERETMPYFASHFEKEVETYKKLVIINLVDQNGREKIIGDAYLKQVLLYNNPNLTYVSFDFHEHCRGMKFENVQTLTDAIYDIITDMRWAWVDQAGVICQQEGIFRVNCMDCLDRTNVVQAAIARVIMEQQLKKLGVMPPEQPLPLKCYRIYQVMWANNGDTISRQYAGTAALKGDFTRTGERKLAGVMKDGVNSANRYYLNRFRDAYRQAVIDLMMGHPVTEDLYSIFSKEKEHEEKEKESQRGAQEQVSLLLQTYMQLLLPDDEKFHGGWALIDCDPSLIDATHKDVDVLLLLSNSAYYVAYYDEEADKVNQYQRLSLEGLEKIEIGPEPTLFGKPKYCCMRLHYKNGETSGYFHTLRSVTRNPEDDGKDTLQCIAEMLRITKQAMGLDVQVVEKKLERRHSKPHEDIMGIQGKAVDQVLGSGLAQGKSFFLNKFSTLNQKVKQTKTNVNIGNFKPLGKLGTFSKPEVKVNFLKPNLHMNLWKSDSSLETHDSNTGSGALKDHGPHSEEISSDSDSYNSDEQPCSGSRENVDYVLPSCGIVASAPRLGSRSQSIGSVEIAVPSVIRVTGCDEKTMDSLSVAADQSPGAASEAEEAILIDFGTPIDVYCHQFVQDAKTKPIEVFEEVAPAPKPQGPQVPLAPDAKLGSSHSQNQLPRPSQLEVESNVHGANLLTVQPVGSATSCGSQKSLEGITGPSSADSNGSRVVSPFAKIRSSMVQVASLTQAGLTQGINFAVAKVQKSPEPDAVNETQENELRAMFTQCQTRIIQI.

Residues 167–518 (YKIFMDSDSF…GDTISRQYAG (352 aa)) form the SAC domain. One can recognise a hSac2 domain in the interval 593–760 (RGAQEQVSLL…RHSKPHEDIM (168 aa)). Disordered regions lie at residues 837-881 (SSLE…SREN) and 979-1008 (PAPK…LPRP). The segment covering 851 to 860 (LKDHGPHSEE) has biased composition (basic and acidic residues). Polar residues-rich tracts occupy residues 864–879 (DSDS…SGSR) and 998–1007 (SSHSQNQLPR).

The protein localises to the membrane. The protein resides in the clathrin-coated pit. It is found in the early endosome. Its subcellular location is the recycling endosome. The catalysed reaction is a myo-inositol phosphate + H2O = myo-inositol + phosphate. Functionally, inositol 4-phosphatase which mainly acts on phosphatidylinositol 4-phosphate. May be functionally linked to OCRL, which converts phosphatidylinositol 4,5-bisphosphate to phosphatidylinositol, for a sequential dephosphorylation of phosphatidylinositol 4,5-bisphosphate at the 5 and 4 position of inositol, thus playing an important role in the endocytic recycling. This is Phosphatidylinositide phosphatase SAC2 from Danio rerio (Zebrafish).